The following is a 316-amino-acid chain: GPI-specific phospholipase A2-like PGAP3 (316 aa).

The signal sequence occupies residues 1 to 19 (MFLAAAAFLLSAPASASQG). Over 20 to 97 (DKEPVYRDCV…GKWPFARFLC (78 aa)) the chain is Lumenal. Asparagine 36 is a glycosylation site (N-linked (GlcNAc...) asparagine). Residues 98–118 (FEEPASALASLLNGLACLLML) form a helical membrane-spanning segment. Residues 119–131 (LRYRSAVPCQSPM) are Cytoplasmic-facing. The chain crosses the membrane as a helical span at residues 132-152 (YHTITAFSLVSLNAWFWSTVF). Residues 153 to 165 (HTRDTYLTEKMDY) lie on the Lumenal side of the membrane. Residues 166–186 (FCASAVILYSIYLCCVRTLGL) form a helical membrane-spanning segment. Over 187-194 (RRPAISSM) the chain is Cytoplasmic. A helical transmembrane segment spans residues 195-215 (VGVLLILAFTSHVSYLTFVSF). The Lumenal segment spans residues 216-220 (DYGYN). The helical transmembrane segment at 221–241 (MAANASIGIINLLWWLCWCWL) threads the bilayer. The Cytoplasmic segment spans residues 242–254 (NRRILPYWWRCGM). The helical transmembrane segment at 255 to 275 (VVLLLHGLALLELLDFPPLFW) threads the bilayer. Residues 276–278 (VLD) are Lumenal-facing. The helical transmembrane segment at 279-299 (AHAVWHLSTVPVHFLFYSFLI) threads the bilayer. The Cytoplasmic portion of the chain corresponds to 300-316 (DDSLHLLNTEKPGVKLD).

It belongs to the PGAP3 family.

Its subcellular location is the golgi apparatus membrane. Its function is as follows. Involved in the fatty acid remodeling steps of GPI-anchor maturation where the unsaturated acyl chain at sn-2 of inositol phosphate is replaced by a saturated stearoyl chain. May catalyze the first step of the fatty acid remodeling, by removing the unsaturated acyl chain at sn-2 of inositol phosphate, generating a lyso-GPI intermediate. The fatty acid remodeling steps is critical for the integration of GPI-APs into lipid rafts. The polypeptide is GPI-specific phospholipase A2-like PGAP3 (Danio rerio (Zebrafish)).